The following is a 1877-amino-acid chain: Proprotein convertase subtilisin/kexin type 5 (1877 aa).

Residues Met-1–Thr-34 form the signal peptide. A propeptide spanning residues Arg-35–Arg-116 is cleaved from the precursor. The Extracellular portion of the chain corresponds to Asp-117–Thr-1768. In terms of domain architecture, Peptidase S8 spans Met-136 to Val-455. Residues Asp-173 and His-214 each act as charge relay system in the active site. Residues Asn-227 and Asn-383 are each glycosylated (N-linked (GlcNAc...) asparagine). Ser-388 (charge relay system) is an active-site residue. One can recognise a P/Homo B domain in the interval Thr-463–Gln-603. Residues Arg-521–Asp-523 carry the Cell attachment site motif. 22 FU repeats span residues Glu-632–His-682, Lys-685–Glu-732, Lys-736–Phe-779, Gly-781–Leu-826, Tyr-834–Ile-881, Gln-884–Glu-929, Lys-931–Pro-981, Gly-984–Gln-1030, Tyr-1034–Gly-1079, Lys-1081–Gly-1123, Leu-1127–Pro-1168, Thr-1206–Pro-1248, Ser-1252–Ala-1299, Asp-1301–Ala-1345, Glu-1347–Pro-1390, Met-1392–Lys-1438, Asn-1442–Trp-1487, Ser-1491–Thr-1536, Ser-1540–Gly-1585, Ser-1589–Ala-1636, Ala-1640–Arg-1685, and Asn-1691–Arg-1738. Residues Cys-638 to Cys-1753 form a CRM (Cys-rich motif) region. Asn-667 carries N-linked (GlcNAc...) asparagine glycosylation. Asn-754, Asn-804, and Asn-854 each carry an N-linked (GlcNAc...) asparagine glycan. Residues Asn-951 and Asn-1016 are each glycosylated (N-linked (GlcNAc...) asparagine). Asn-1220 carries N-linked (GlcNAc...) asparagine glycosylation. N-linked (GlcNAc...) asparagine glycosylation occurs at Asn-1317. N-linked (GlcNAc...) asparagine glycosylation is present at Asn-1523. Residues Asn-1711 and Asn-1733 are each glycosylated (N-linked (GlcNAc...) asparagine). The chain crosses the membrane as a helical span at residues Ala-1769–Trp-1789. At Arg-1790–Gln-1877 the chain is on the cytoplasmic side. AC regions lie at residues Val-1825–Met-1844 and Tyr-1856–Gln-1877.

This sequence belongs to the peptidase S8 family. In terms of tissue distribution, PC5A is expressed in most tissues but is most abundant in the intestine and adrenals. PC5B is expressed in the intestine, adrenals and lung but not in the brain.

It is found in the secreted. The protein localises to the endomembrane system. Functionally, serine endoprotease that processes various proproteins by cleavage at paired basic amino acids, recognizing the RXXX[KR]R consensus motif. Likely functions in the constitutive and regulated secretory pathways. Plays an essential role in pregnancy establishment by proteolytic activation of a number of important factors such as BMP2, CALD1 and alpha-integrins. May be responsible for the maturation of gastrointestinal peptides. May be involved in the cellular proliferation of adrenal cortex via the activation of growth factors. The polypeptide is Proprotein convertase subtilisin/kexin type 5 (Pcsk5) (Mus musculus (Mouse)).